The primary structure comprises 241 residues: Thiamine import ATP-binding protein ThiQ (241 aa).

The 229-residue stretch at 7-235 (IRLSDVRFSY…AGPEALRHYI (229 aa)) folds into the ABC transporter domain. Residue 37–44 (GPSGSGKS) participates in ATP binding.

It belongs to the ABC transporter superfamily. Thiamine importer (TC 3.A.1.19.1) family. The complex is composed of two ATP-binding proteins (ThiQ), two transmembrane proteins (ThiP) and a solute-binding protein (ThiB).

It localises to the cell inner membrane. The enzyme catalyses thiamine(out) + ATP + H2O = thiamine(in) + ADP + phosphate + H(+). Part of the ABC transporter complex ThiBPQ involved in thiamine import. Responsible for energy coupling to the transport system. The sequence is that of Thiamine import ATP-binding protein ThiQ from Brucella abortus biovar 1 (strain 9-941).